The primary structure comprises 215 residues: 3-isopropylmalate dehydratase small subunit (215 aa).

The protein belongs to the LeuD family. LeuD type 1 subfamily. Heterodimer of LeuC and LeuD.

The catalysed reaction is (2R,3S)-3-isopropylmalate = (2S)-2-isopropylmalate. Its pathway is amino-acid biosynthesis; L-leucine biosynthesis; L-leucine from 3-methyl-2-oxobutanoate: step 2/4. Catalyzes the isomerization between 2-isopropylmalate and 3-isopropylmalate, via the formation of 2-isopropylmaleate. This chain is 3-isopropylmalate dehydratase small subunit, found in Xylella fastidiosa (strain M12).